Consider the following 514-residue polypeptide: Beta-glucosidase 16 (514 aa).

The signal sequence occupies residues 1-21 (MRGKFLSLLLLITLACIGVSA). Glutamine 49 is a binding site for a beta-D-glucoside. Residue asparagine 80 is glycosylated (N-linked (GlcNAc...) asparagine). A beta-D-glucoside contacts are provided by residues histidine 153 and 198-199 (NE). Glutamate 199 serves as the catalytic Proton donor. Cysteine 218 and cysteine 226 form a disulfide bridge. An a beta-D-glucoside-binding site is contributed by tyrosine 343. Asparagine 357 carries an N-linked (GlcNAc...) asparagine glycan. Residues glutamate 413, tryptophan 458, 465–466 (EW), and phenylalanine 474 each bind a beta-D-glucoside. Catalysis depends on glutamate 413, which acts as the Nucleophile.

The protein belongs to the glycosyl hydrolase 1 family. In terms of tissue distribution, expressed at low levels in cauline leaves and flowers.

It carries out the reaction Hydrolysis of terminal, non-reducing beta-D-glucosyl residues with release of beta-D-glucose.. This Arabidopsis thaliana (Mouse-ear cress) protein is Beta-glucosidase 16.